A 546-amino-acid chain; its full sequence is Phosphoglucomutase (546 aa).

The active-site Phosphoserine intermediate is the Ser-135. Mg(2+) contacts are provided by Ser-135, Asp-288, Asp-290, and Asp-292.

It belongs to the phosphohexose mutase family. It depends on Mg(2+) as a cofactor.

It catalyses the reaction alpha-D-glucose 1-phosphate = alpha-D-glucose 6-phosphate. It functions in the pathway glycolipid metabolism; diglucosyl-diacylglycerol biosynthesis. In terms of biological role, catalyzes the interconversion between glucose-6-phosphate and alpha-glucose-1-phosphate. This is the first step in the biosynthesis of diglucosyl-diacylglycerol (Glc2-DAG), i.e. a glycolipid found in the membrane, which is also used as a membrane anchor for lipoteichoic acid (LTA). The chain is Phosphoglucomutase (pgcA) from Staphylococcus epidermidis (strain ATCC 12228 / FDA PCI 1200).